A 227-amino-acid polypeptide reads, in one-letter code: Protein Saci_0792 (227 aa).

The 195-residue stretch at 15–209 (DIGKQLIKIA…EINKNTDEII (195 aa)) folds into the AMMECR1 domain.

This Sulfolobus acidocaldarius (strain ATCC 33909 / DSM 639 / JCM 8929 / NBRC 15157 / NCIMB 11770) protein is Protein Saci_0792.